A 504-amino-acid polypeptide reads, in one-letter code: Glucose-6-phosphate isomerase (504 aa).

Catalysis depends on E333, which acts as the Proton donor. Residues H364 and K473 contribute to the active site.

This sequence belongs to the GPI family.

It is found in the cytoplasm. It catalyses the reaction alpha-D-glucose 6-phosphate = beta-D-fructose 6-phosphate. It functions in the pathway carbohydrate biosynthesis; gluconeogenesis. Its pathway is carbohydrate degradation; glycolysis; D-glyceraldehyde 3-phosphate and glycerone phosphate from D-glucose: step 2/4. Its function is as follows. Catalyzes the reversible isomerization of glucose-6-phosphate to fructose-6-phosphate. The protein is Glucose-6-phosphate isomerase of Xanthomonas oryzae pv. oryzae (strain KACC10331 / KXO85).